Consider the following 1161-residue polypeptide: DNA-directed RNA polymerase III subunit 2 (1161 aa).

Residues 1104-1125 form a C4-type zinc finger; the sequence is CRACGLLGYYNYKLKKAVCTTC.

This sequence belongs to the RNA polymerase beta chain family. In terms of assembly, component of the RNA polymerase III (Pol III) complex consisting of 17 subunits.

Its subcellular location is the nucleus. It carries out the reaction RNA(n) + a ribonucleoside 5'-triphosphate = RNA(n+1) + diphosphate. DNA-dependent RNA polymerase catalyzes the transcription of DNA into RNA using the four ribonucleoside triphosphates as substrates. Second largest core component of RNA polymerase III which synthesizes small RNAs, such as 5S rRNA and tRNAs. Proposed to contribute to the polymerase catalytic activity and forms the polymerase active center together with the largest subunit. Pol III is composed of mobile elements and NRPC2 is part of the core element with the central large cleft and probably a clamp element that moves to open and close the cleft. Its function is as follows. Essential for the completion of the three rounds of mitosis in female megaspores required for the development of mature gametophytes. The chain is DNA-directed RNA polymerase III subunit 2 from Arabidopsis thaliana (Mouse-ear cress).